The primary structure comprises 481 residues: UDP-N-acetylmuramoyl-L-alanyl-D-glutamate--L-lysine ligase (481 aa).

Residue S42 coordinates UDP-N-acetyl-alpha-D-muramoyl-L-alanyl-D-glutamate. 118 to 124 (GTKGKTT) is a binding site for ATP. UDP-N-acetyl-alpha-D-muramoyl-L-alanyl-D-glutamate contacts are provided by residues N158, 160–161 (TT), S187, and R195. K229 carries the post-translational modification N6-carboxylysine. Residues 404 to 407 (DDPN) carry the L-lysine recognition motif motif.

The protein belongs to the MurCDEF family. MurE subfamily. Post-translationally, carboxylation is probably crucial for Mg(2+) binding and, consequently, for the gamma-phosphate positioning of ATP.

Its subcellular location is the cytoplasm. The enzyme catalyses UDP-N-acetyl-alpha-D-muramoyl-L-alanyl-D-glutamate + L-lysine + ATP = UDP-N-acetyl-alpha-D-muramoyl-L-alanyl-gamma-D-glutamyl-L-lysine + ADP + phosphate + H(+). It functions in the pathway cell wall biogenesis; peptidoglycan biosynthesis. Functionally, catalyzes the addition of L-lysine to the nucleotide precursor UDP-N-acetylmuramoyl-L-alanyl-D-glutamate (UMAG) in the biosynthesis of bacterial cell-wall peptidoglycan. The protein is UDP-N-acetylmuramoyl-L-alanyl-D-glutamate--L-lysine ligase of Streptococcus thermophilus (strain ATCC BAA-491 / LMD-9).